The primary structure comprises 379 residues: Cytochrome b (379 aa).

Helical transmembrane passes span 33–53 (FGSL…FLAM), 77–98 (WLIR…FIHV), 113–133 (WNIG…GYVL), and 178–198 (FFAF…VHLL). Heme b contacts are provided by His83 and His97. Heme b-binding residues include His182 and His196. His201 lines the a ubiquinone pocket. A run of 4 helical transmembrane segments spans residues 226 to 246 (IKDL…ALFF), 288 to 308 (LGGV…PLLN), 320 to 340 (ITQT…WIGG), and 347 to 367 (FTMI…ILXP).

The protein belongs to the cytochrome b family. The cytochrome bc1 complex contains 11 subunits: 3 respiratory subunits (MT-CYB, CYC1 and UQCRFS1), 2 core proteins (UQCRC1 and UQCRC2) and 6 low-molecular weight proteins (UQCRH/QCR6, UQCRB/QCR7, UQCRQ/QCR8, UQCR10/QCR9, UQCR11/QCR10 and a cleavage product of UQCRFS1). This cytochrome bc1 complex then forms a dimer. Requires heme b as cofactor.

It is found in the mitochondrion inner membrane. In terms of biological role, component of the ubiquinol-cytochrome c reductase complex (complex III or cytochrome b-c1 complex) that is part of the mitochondrial respiratory chain. The b-c1 complex mediates electron transfer from ubiquinol to cytochrome c. Contributes to the generation of a proton gradient across the mitochondrial membrane that is then used for ATP synthesis. The protein is Cytochrome b (MT-CYB) of Akodon toba (Chaco grass mouse).